A 732-amino-acid polypeptide reads, in one-letter code: MGFGSCSRHALFTPAAFSGSFTTMTTSCFKRVYTAQIHGGDALGKRLPSVSSFSGQLPRHGLHRQSLAFFSTSHRRQTSPPPSPRTTSQSPTVPSKASTTPPTSLNTSKPIATESQDKTDWSIIVKLAGNIWPKNNPNVKFRVIGALTLLVAGKVLNVQVPFFFKTIVDSLNVPITESTTVWVLAGASIAGYGAARILTTLFGELRNAVFASVAQNAIRKVARETFEHLLNMDMKFHLERQTGGLTRAIDRGTKGISFILSSIVFHVIPTALEISMVCGILSWKFGWDFAAVTAITMLLYTWFTIKTTAWRTTFRKQANAADNKGATVAVDSLINYEAVKSFNNEKYEVAQYDTTLKAYEKASVKIATSLAALNSGQNFIFSSALTMMMLLGAQGIVKGTMTVGDLVLVNQLVFQLSLPLNFLGTVYRELRQSLIDMDVMFNLQSLNSAIKDTPTAKPLHLKGGEIEFRNVAFAYHPERPIFRDLSFKIPAGQKVAIVGPSGCGKSTVFRLLFRFYDSNSGQILIDGQDIKTVTLDSLRRSIGVVPQDTPLFHADILHNIRYGNLEATDEQVYEAARKAHVEGTIQRLPEKYATKVGERGLMISGGEKQRLAVARVLLKDPPVLFFDEATSALDVYTETELMRNINSILTGQGKTSVFIAHRLRTISDADLIIVLQDGYVAEQGTHEQLLAMPGGVYHRLWQAQLTESTQPTDEEIERQREELEVVDEKKKQ.

The transit peptide at 1-55 (MGFGSCSRHALFTPAAFSGSFTTMTTSCFKRVYTAQIHGGDALGKRLPSVSSFSG) directs the protein to the mitochondrion. Topologically, residues 56-143 (QLPRHGLHRQ…KNNPNVKFRV (88 aa)) are mitochondrial matrix. The interval 71 to 114 (STSHRRQTSPPPSPRTTSQSPTVPSKASTTPPTSLNTSKPIATE) is disordered. Low complexity predominate over residues 85 to 95 (RTTSQSPTVPS). The segment covering 96-114 (KASTTPPTSLNTSKPIATE) has biased composition (polar residues). A helical membrane pass occupies residues 144 to 164 (IGALTLLVAGKVLNVQVPFFF). Residues 144–432 (IGALTLLVAG…LGTVYRELRQ (289 aa)) form the ABC transmembrane type-1 domain. The Mitochondrial intermembrane segment spans residues 165-181 (KTIVDSLNVPITESTTV). Residues 182–202 (WVLAGASIAGYGAARILTTLF) form a helical membrane-spanning segment. Over 203–262 (GELRNAVFASVAQNAIRKVARETFEHLLNMDMKFHLERQTGGLTRAIDRGTKGISFILSS) the chain is Mitochondrial matrix. Residues 263 to 283 (IVFHVIPTALEISMVCGILSW) traverse the membrane as a helical segment. Position 284 (Lys-284) is a topological domain, mitochondrial intermembrane. Residues 285-305 (FGWDFAAVTAITMLLYTWFTI) form a helical membrane-spanning segment. Residues 306-378 (KTTAWRTTFR…SLAALNSGQN (73 aa)) are Mitochondrial matrix-facing. Glutathione-binding positions include 311–315 (RTTFR) and 374–377 (NSGQ). Residues 379 to 399 (FIFSSALTMMMLLGAQGIVKG) form a helical membrane-spanning segment. The Mitochondrial intermembrane segment spans residues 400–405 (TMTVGD). Residues 406–426 (LVLVNQLVFQLSLPLNFLGTV) traverse the membrane as a helical segment. Gly-424 contacts glutathione. The Mitochondrial matrix portion of the chain corresponds to 427-732 (YRELRQSLID…LEVVDEKKKQ (306 aa)). In terms of domain architecture, ABC transporter spans 466 to 702 (IEFRNVAFAY…PGGVYHRLWQ (237 aa)). ATP is bound by residues Tyr-475 and 499-506 (GPSGCGKS). A disordered region spans residues 708 to 732 (STQPTDEEIERQREELEVVDEKKKQ). Residues 717–732 (ERQREELEVVDEKKKQ) are compositionally biased toward basic and acidic residues.

It belongs to the ABC transporter superfamily. ABCB family. Heavy Metal importer (TC 3.A.1.210) subfamily. As to quaternary structure, homodimer.

The protein resides in the mitochondrion inner membrane. In terms of biological role, performs an essential function in the generation of cytoplasmic iron-sulfur proteins by mediating the ATP-dependent export of mitochondrial Fe/S cluster precursors synthesized by NFS1 and other mitochondrial proteins. Hydrolyzes ATP. Binds glutathione and may function by transporting a glutathione-conjugated iron-sulfur compound. Plays a role during copper stress, in a manner dependent on the copper metalloregulatory transcription factor CUF1. This chain is Iron-sulfur clusters transporter ATM1, mitochondrial, found in Cryptococcus neoformans var. grubii serotype A (strain H99 / ATCC 208821 / CBS 10515 / FGSC 9487) (Filobasidiella neoformans var. grubii).